Reading from the N-terminus, the 357-residue chain is NAD-dependent protein deacetylase HST2 (357 aa).

An N-acetylserine modification is found at serine 2. Residues threonine 5–glutamine 284 form the Deacetylase sirtuin-type domain. NAD(+) contacts are provided by residues glycine 32–tyrosine 52 and glutamine 115–aspartate 118. Histidine 135 functions as the Proton acceptor in the catalytic mechanism. Cysteine 143, cysteine 146, cysteine 170, and cysteine 173 together coordinate Zn(2+). NAD(+)-binding positions include glycine 223–serine 225, asparagine 248–glutamate 250, and serine 270. The segment covering leucine 317–aspartate 329 has biased composition (basic and acidic residues). Positions leucine 317–glutamate 357 are disordered. At serine 340 the chain carries Phosphoserine.

The protein belongs to the sirtuin family. Class I subfamily. As to quaternary structure, homotrimer. Monomer. Homotrimeric in its unliganded state. Undergoes a trimer-monomer transition upon acetyl-lysine substrate binding. Requires Zn(2+) as cofactor.

The protein localises to the cytoplasm. It localises to the nucleus. The catalysed reaction is N(6)-acetyl-L-lysyl-[protein] + NAD(+) + H2O = 2''-O-acetyl-ADP-D-ribose + nicotinamide + L-lysyl-[protein]. With respect to regulation, inhibited by ADP-ribose and nicotinamide. NAD-dependent histone deacetylase that is involved in nuclear silencing events. Derepresses subtelomeric silencing and increases repression in nucleolar (rDNA) silencing. Its function is negatively regulated by active nuclear export. The chain is NAD-dependent protein deacetylase HST2 (HST2) from Saccharomyces cerevisiae (strain ATCC 204508 / S288c) (Baker's yeast).